The chain runs to 464 residues: Methionine aminopeptidase 2 (464 aa).

The tract at residues 1 to 86 (MGSKTPGNHR…RKKKKKNTKE (86 aa)) is disordered. Residues 43–54 (GESEGGEDEDDD) are compositionally biased toward acidic residues. Over residues 72-83 (KRNKRRKKKKKN) the composition is skewed to basic residues. H216 is a binding site for substrate. The a divalent metal cation site is built by D237, D248, and H317. H325 is a substrate binding site. Residues E350 and E445 each contribute to the a divalent metal cation site.

Belongs to the peptidase M24A family. Methionine aminopeptidase eukaryotic type 2 subfamily. Requires Co(2+) as cofactor. It depends on Zn(2+) as a cofactor. The cofactor is Mn(2+). Fe(2+) serves as cofactor.

It localises to the cytoplasm. It carries out the reaction Release of N-terminal amino acids, preferentially methionine, from peptides and arylamides.. Cotranslationally removes the N-terminal methionine from nascent proteins. The N-terminal methionine is often cleaved when the second residue in the primary sequence is small and uncharged (Met-Ala-, Cys, Gly, Pro, Ser, Thr, or Val). The polypeptide is Methionine aminopeptidase 2 (Ajellomyces capsulatus (strain NAm1 / WU24) (Darling's disease fungus)).